Here is a 669-residue protein sequence, read N- to C-terminus: Myb-like protein M (669 aa).

The tract at residues 27–69 (DPSLMDDEFSDNEYDLSPKDDVPSPSKRGRGQIQNGIRRSPNK) is disordered. Residues 30-40 (LMDDEFSDNEY) show a composition bias toward acidic residues. HTH myb-type domains lie at 60 to 118 (QNGI…SPDI) and 119 to 170 (RKGP…SREV). 2 consecutive DNA-binding regions (H-T-H motif) follow at residues 90–114 (WKRI…KRVL) and 142–166 (WKKI…KSLQ). One can recognise a Myb-like domain in the interval 172–223 (WVPKEDEVLVKKVDEMGENLSWLEVSEYLAKLKHTNTLRTALECKTRYLQLT). 2 disordered regions span residues 226-530 (GGSI…EDNG) and 550-636 (IKNK…PHQS). Low complexity-rich tracts occupy residues 234 to 382 (NQSN…SSPS), 389 to 415 (NNNN…NSNN), and 450 to 464 (PTSL…SSPS). The span at 465 to 482 (CNNSIRQPSPSPSIKTFK) shows a compositional bias: polar residues. Low complexity-rich tracts occupy residues 483-521 (STIV…NNDN), 555-593 (NNNN…NSDN), and 611-636 (SNFK…PHQS).

The protein resides in the nucleus. This chain is Myb-like protein M (mybM), found in Dictyostelium discoideum (Social amoeba).